The sequence spans 286 residues: Polyamine aminopropyltransferase (286 aa).

The 234-residue stretch at 5 to 238 (PLWHETLHDH…GIMTFAWASD (234 aa)) folds into the PABS domain. Position 33 (Gln33) interacts with S-methyl-5'-thioadenosine. Spermidine is bound by residues His64 and Asp88. Residues Glu108 and 140–141 (DG) contribute to the S-methyl-5'-thioadenosine site. Asp158 serves as the catalytic Proton acceptor. 158–161 (DCTD) lines the spermidine pocket. Pro165 provides a ligand contact to S-methyl-5'-thioadenosine.

Belongs to the spermidine/spermine synthase family. Homodimer or homotetramer.

The protein localises to the cytoplasm. It catalyses the reaction S-adenosyl 3-(methylsulfanyl)propylamine + putrescine = S-methyl-5'-thioadenosine + spermidine + H(+). It participates in amine and polyamine biosynthesis; spermidine biosynthesis; spermidine from putrescine: step 1/1. In terms of biological role, catalyzes the irreversible transfer of a propylamine group from the amino donor S-adenosylmethioninamine (decarboxy-AdoMet) to putrescine (1,4-diaminobutane) to yield spermidine. The sequence is that of Polyamine aminopropyltransferase from Klebsiella pneumoniae subsp. pneumoniae (strain ATCC 700721 / MGH 78578).